The chain runs to 258 residues: Tetraspanin-15 (258 aa).

Over Met-1–Tyr-20 the chain is Cytoplasmic. The chain crosses the membrane as a helical span at residues Ile-21 to Leu-41. Topologically, residues Leu-42–Arg-62 are extracellular. The chain crosses the membrane as a helical span at residues Ile-63 to Phe-83. Over Lys-84–Cys-93 the chain is Cytoplasmic. Residues Ala-94–Phe-114 form a helical membrane-spanning segment. The Extracellular portion of the chain corresponds to Arg-115–Asp-223. A helical membrane pass occupies residues Leu-224–Ile-244. The Cytoplasmic segment spans residues Pro-245–Lys-258.

Belongs to the tetraspanin (TM4SF) family. In terms of assembly, interacts with doxa-1 and bli-3. As to expression, expressed in the body wall (hyp7 hypodermal syncitium), pharynx and vulva. Expressed in a punctate pattern along the thick region of the hypodermis.

The protein resides in the membrane. Its function is as follows. Plays a role in cuticle biogenesis. In complex with doxa-1 and the dual oxidase bli-3, promotes the generation of reactive oxygen species (ROS) and tyrosine cross-linking of collagen, thus stabilizing cuticular extracellular matrix. This is Tetraspanin-15 from Caenorhabditis elegans.